The sequence spans 141 residues: Small ribosomal subunit protein uS12 (141 aa).

This sequence belongs to the universal ribosomal protein uS12 family. Part of the 30S ribosomal subunit.

Its function is as follows. With S4 and S5 plays an important role in translational accuracy. Located at the interface of the 30S and 50S subunits. The protein is Small ribosomal subunit protein uS12 of Methanothermobacter thermautotrophicus (strain ATCC 29096 / DSM 1053 / JCM 10044 / NBRC 100330 / Delta H) (Methanobacterium thermoautotrophicum).